The following is a 2997-amino-acid chain: Chromodomain-helicase-DNA-binding protein 7 (2997 aa).

A disordered region spans residues proline 86–methionine 144. Positions arginine 88–histidine 106 are enriched in polar residues. At arginine 148 the chain carries Omega-N-methylarginine. Disordered stretches follow at residues tyrosine 160–methionine 186, serine 199–proline 287, glutamine 375–glycine 419, glycine 498–glutamate 816, and arginine 938–serine 959. Over residues glutamine 166–proline 177 the composition is skewed to pro residues. Composition is skewed to polar residues over residues serine 199–asparagine 224 and valine 238–glutamine 255. Arginine 286 is modified (asymmetric dimethylarginine). Polar residues predominate over residues glutamine 375–tyrosine 390. Positions glycine 498–glutamine 510 are enriched in low complexity. Residues valine 607 to phenylalanine 620 are compositionally biased toward basic and acidic residues. Over residues glutamine 627–glycine 636 the composition is skewed to polar residues. Position 637 is a phosphoserine (serine 637). 2 stretches are compositionally biased toward basic and acidic residues: residues lysine 650 to glutamate 682 and glycine 717 to lysine 729. The residue at position 725 (serine 725) is a Phosphoserine. Residues glutamine 746–arginine 758 show a composition bias toward basic residues. Residues tyrosine 759 to aspartate 769 show a composition bias toward basic and acidic residues. Residues serine 782–serine 794 are compositionally biased toward polar residues. 2 consecutive Chromo domains span residues proline 800–lysine 867 and valine 882–arginine 947. One can recognise a Helicase ATP-binding domain in the interval leucine 980–serine 1154. An ATP-binding site is contributed by aspartate 993–threonine 1000. A DEAH box motif is present at residues aspartate 1105–histidine 1108. In terms of domain architecture, Helicase C-terminal spans leucine 1294–leucine 1464. Disordered stretches follow at residues phenylalanine 1576–glycine 1600 and aspartate 1837–proline 1863. Phosphoserine occurs at positions 1577 and 1581. The segment covering glutamate 1584–aspartate 1596 has biased composition (basic and acidic residues). Residues aspartate 1844–proline 1855 are compositionally biased toward acidic residues. Serine 1874 carries the phosphoserine modification. 2 stretches are compositionally biased toward basic and acidic residues: residues glutamine 2170–glycine 2189 and glycine 2198–cysteine 2207. The tract at residues glutamine 2170 to glutamate 2290 is disordered. Residues serine 2231, serine 2233, serine 2237, serine 2251, serine 2272, serine 2275, serine 2356, and serine 2395 each carry the phosphoserine modification. Over residues serine 2237–serine 2251 the composition is skewed to acidic residues. Residues arginine 2401–glutamine 2431 are a coiled coil. The residue at position 2472 (threonine 2472) is a Phosphothreonine. Phosphoserine is present on residues serine 2533 and serine 2535. Residue threonine 2551 is modified to Phosphothreonine. Phosphoserine occurs at positions 2559 and 2619. Residues alanine 2823 to serine 2832 show a composition bias toward low complexity. 2 disordered regions span residues alanine 2823–glycine 2872 and glutamate 2935–glutamate 2997. Basic and acidic residues-rich tracts occupy residues serine 2839–glutamate 2849 and glutamate 2935–glutamate 2951. Residues serine 2956 and serine 2961 each carry the phosphoserine modification. Positions leucine 2970 to glutamate 2997 are enriched in acidic residues.

Belongs to the SNF2/RAD54 helicase family. May interact with CTCF. Interacts with CHD8. Interacts with FAM124B. Found in a complex composed of AGO2, CHD7 and ARB2A. Interacts with TLK2. Widely expressed in fetal and adult tissues.

It is found in the nucleus. The protein resides in the nucleolus. It catalyses the reaction ATP + H2O = ADP + phosphate + H(+). Functionally, ATP-dependent chromatin-remodeling factor, slides nucleosomes along DNA; nucleosome sliding requires ATP. Probable transcription regulator. May be involved in the in 45S precursor rRNA production. The sequence is that of Chromodomain-helicase-DNA-binding protein 7 (CHD7) from Homo sapiens (Human).